Consider the following 286-residue polypeptide: S-adenosylmethionine-dependent methyltransferase UmaA (286 aa).

Residues 32–33, 67–75, 93–98, and 122–123 each bind S-adenosyl-L-methionine; these read YT, LLDIGCGWG, TLSRNQ, and WD. Cysteine 268 is an active-site residue.

The protein belongs to the CFA/CMAS family.

The protein localises to the cytoplasm. In terms of biological role, methyltransferase that modifies short-chain fatty acids. In vitro, catalyzes the transfer of the methyl group from S-adenosyl-L-methionine (SAM) to the double bond of phospholipid-linked oleic acid to produce tuberculostearic acid (10-methylstearic-acid or TSA). This chain is S-adenosylmethionine-dependent methyltransferase UmaA, found in Mycobacterium tuberculosis (strain ATCC 25618 / H37Rv).